Consider the following 177-residue polypeptide: Adenine phosphoribosyltransferase (177 aa).

This sequence belongs to the purine/pyrimidine phosphoribosyltransferase family. As to quaternary structure, homodimer.

It is found in the cytoplasm. It carries out the reaction AMP + diphosphate = 5-phospho-alpha-D-ribose 1-diphosphate + adenine. The protein operates within purine metabolism; AMP biosynthesis via salvage pathway; AMP from adenine: step 1/1. In terms of biological role, catalyzes a salvage reaction resulting in the formation of AMP, that is energically less costly than de novo synthesis. In Mycobacteroides abscessus (strain ATCC 19977 / DSM 44196 / CCUG 20993 / CIP 104536 / JCM 13569 / NCTC 13031 / TMC 1543 / L948) (Mycobacterium abscessus), this protein is Adenine phosphoribosyltransferase.